Here is a 223-residue protein sequence, read N- to C-terminus: MARLGALLLAAALGALLSFALLAAAVASDYWYILEVADAGNGSAWPGRAELLSSHSGLWRICEGQNGCIPLVDPFASESLDVSTSVQHLILLHRAVIVVLPLSLVLLVCGWICGLLSSLAQSVSLLLFTGCYFLLGSVLTLAGVSIYISYSHLAFAETVQQYGPQHMQGVRVSFGWSMALAWGSCALEAFSGTLLLSAAWTLSLSPPICGHLSPQQVGGRGGD.

The first 28 residues, 1 to 28 (MARLGALLLAAALGALLSFALLAAAVAS), serve as a signal peptide directing secretion. N-linked (GlcNAc...) asparagine glycosylation occurs at N41. 3 helical membrane passes run 96–116 (VIVV…CGLL), 126–146 (LLFT…GVSI), and 176–196 (WSMA…TLLL).

The protein belongs to the PMP-22/EMP/MP20 family. In terms of processing, N-glycosylated.

The protein resides in the membrane. The protein localises to the endoplasmic reticulum. The chain is Transmembrane protein 235 (TMEM235) from Homo sapiens (Human).